The following is a 103-amino-acid chain: MNREEVQLLGFEIVAFAGDARSKFLEALTAAQAGDFAKADALIEEGNNCIAEAHRAQTSLLAKEAQGDDIAYSVTMMHGQDHLMTTILLKDLMKHLLEFYKRG.

A PTS EIIA type-3 domain is found at 1–102; sequence MNREEVQLLG…MKHLLEFYKR (102 aa). His-78 serves as the catalytic Tele-phosphohistidine intermediate. The residue at position 78 (His-78) is a Phosphohistidine; by HPr. Residue Asp-81 participates in Mg(2+) binding.

Homotrimer. Mg(2+) is required as a cofactor.

The protein localises to the cytoplasm. The phosphoenolpyruvate-dependent sugar phosphotransferase system (sugar PTS), a major carbohydrate active transport system, catalyzes the phosphorylation of incoming sugar substrates concomitantly with their translocation across the cell membrane. The enzyme II LacEF PTS system is involved in lactose transport. In Staphylococcus aureus (strain COL), this protein is PTS system lactose-specific EIIA component.